The following is a 91-amino-acid chain: Large ribosomal subunit protein bL31B (91 aa).

The protein belongs to the bacterial ribosomal protein bL31 family. Type B subfamily. In terms of assembly, part of the 50S ribosomal subunit.

The sequence is that of Large ribosomal subunit protein bL31B from Neisseria gonorrhoeae (strain NCCP11945).